Here is a 367-residue protein sequence, read N- to C-terminus: Uroporphyrinogen decarboxylase (367 aa).

Substrate contacts are provided by residues 27–31 (RQAGR), Asp77, Tyr157, Thr212, and His333.

Belongs to the uroporphyrinogen decarboxylase family. In terms of assembly, homodimer.

It localises to the cytoplasm. It carries out the reaction uroporphyrinogen III + 4 H(+) = coproporphyrinogen III + 4 CO2. Its pathway is porphyrin-containing compound metabolism; protoporphyrin-IX biosynthesis; coproporphyrinogen-III from 5-aminolevulinate: step 4/4. Catalyzes the decarboxylation of four acetate groups of uroporphyrinogen-III to yield coproporphyrinogen-III. The chain is Uroporphyrinogen decarboxylase from Cupriavidus metallidurans (strain ATCC 43123 / DSM 2839 / NBRC 102507 / CH34) (Ralstonia metallidurans).